A 493-amino-acid chain; its full sequence is Glutamate--tRNA ligase (493 aa).

The 'HIGH' region motif lies at proline 9–threonine 19. A 'KMSKS' region motif is present at residues lysine 249–arginine 253. Residue lysine 252 participates in ATP binding.

It belongs to the class-I aminoacyl-tRNA synthetase family. Glutamate--tRNA ligase type 1 subfamily. In terms of assembly, monomer.

The protein localises to the cytoplasm. The catalysed reaction is tRNA(Glu) + L-glutamate + ATP = L-glutamyl-tRNA(Glu) + AMP + diphosphate. Its function is as follows. Catalyzes the attachment of glutamate to tRNA(Glu) in a two-step reaction: glutamate is first activated by ATP to form Glu-AMP and then transferred to the acceptor end of tRNA(Glu). In Marinobacter nauticus (strain ATCC 700491 / DSM 11845 / VT8) (Marinobacter aquaeolei), this protein is Glutamate--tRNA ligase.